Consider the following 27-residue polypeptide: Equinin A (27 aa).

Residues 1 to 13 (AVDKGGGKAEKKD) are compositionally biased toward basic and acidic residues. Residues 1 to 27 (AVDKGGGKAEKKDGNRKKKLAGGEGGG) form a disordered region.

Its subcellular location is the secreted. Peptide with unknown function. Does not show antimicrobial and hemolytic activities. This Actinia equina (Beadlet anemone) protein is Equinin A.